We begin with the raw amino-acid sequence, 177 residues long: Disulfide bond formation protein B (177 aa).

At Met-1–Val-14 the chain is on the cytoplasmic side. A helical membrane pass occupies residues Trp-15–Tyr-31. The Periplasmic portion of the chain corresponds to Phe-32 to Leu-49. Residues Cys-41 and Cys-44 are joined by a disulfide bond. The helical transmembrane segment at Ala-50 to Pro-65 threads the bilayer. Over Leu-66 to Leu-72 the chain is Cytoplasmic. A helical transmembrane segment spans residues Ile-73–Phe-90. Residues Arg-91–Gln-145 lie on the Periplasmic side of the membrane. Cys-105 and Cys-131 are oxidised to a cystine. A helical membrane pass occupies residues Trp-146–Ala-164. At Gln-165–Asn-177 the chain is on the cytoplasmic side.

The protein belongs to the DsbB family.

The protein resides in the cell inner membrane. Its function is as follows. Required for disulfide bond formation in some periplasmic proteins. Acts by oxidizing the DsbA protein. This chain is Disulfide bond formation protein B, found in Haemophilus influenzae (strain 86-028NP).